The chain runs to 314 residues: 4-hydroxy-3-methylbut-2-enyl diphosphate reductase (314 aa).

A [4Fe-4S] cluster-binding site is contributed by C12. Residues H41 and H74 each contribute to the (2E)-4-hydroxy-3-methylbut-2-enyl diphosphate site. Dimethylallyl diphosphate is bound by residues H41 and H74. The isopentenyl diphosphate site is built by H41 and H74. [4Fe-4S] cluster is bound at residue C96. A (2E)-4-hydroxy-3-methylbut-2-enyl diphosphate-binding site is contributed by H124. H124 contacts dimethylallyl diphosphate. H124 serves as a coordination point for isopentenyl diphosphate. E126 serves as the catalytic Proton donor. Position 167 (T167) interacts with (2E)-4-hydroxy-3-methylbut-2-enyl diphosphate. Residue C197 coordinates [4Fe-4S] cluster. Residues S225, S226, N227, and S269 each coordinate (2E)-4-hydroxy-3-methylbut-2-enyl diphosphate. S225, S226, N227, and S269 together coordinate dimethylallyl diphosphate. Isopentenyl diphosphate contacts are provided by S225, S226, N227, and S269.

Belongs to the IspH family. The cofactor is [4Fe-4S] cluster.

The catalysed reaction is isopentenyl diphosphate + 2 oxidized [2Fe-2S]-[ferredoxin] + H2O = (2E)-4-hydroxy-3-methylbut-2-enyl diphosphate + 2 reduced [2Fe-2S]-[ferredoxin] + 2 H(+). The enzyme catalyses dimethylallyl diphosphate + 2 oxidized [2Fe-2S]-[ferredoxin] + H2O = (2E)-4-hydroxy-3-methylbut-2-enyl diphosphate + 2 reduced [2Fe-2S]-[ferredoxin] + 2 H(+). It functions in the pathway isoprenoid biosynthesis; dimethylallyl diphosphate biosynthesis; dimethylallyl diphosphate from (2E)-4-hydroxy-3-methylbutenyl diphosphate: step 1/1. It participates in isoprenoid biosynthesis; isopentenyl diphosphate biosynthesis via DXP pathway; isopentenyl diphosphate from 1-deoxy-D-xylulose 5-phosphate: step 6/6. Its function is as follows. Catalyzes the conversion of 1-hydroxy-2-methyl-2-(E)-butenyl 4-diphosphate (HMBPP) into a mixture of isopentenyl diphosphate (IPP) and dimethylallyl diphosphate (DMAPP). Acts in the terminal step of the DOXP/MEP pathway for isoprenoid precursor biosynthesis. This Haemophilus influenzae (strain 86-028NP) protein is 4-hydroxy-3-methylbut-2-enyl diphosphate reductase.